A 1121-amino-acid polypeptide reads, in one-letter code: Ataxin-2 homolog (1121 aa).

Positions 1 to 10 (MNNNSKRKTR) are enriched in basic residues. Residues 1 to 53 (MNNNSKRKTRPSGGGGGGGASGGISRYNANDNSLRPANNKSGAAGNSAGAGAG) are disordered. Over residues 12 to 22 (SGGGGGGGASG) the composition is skewed to gly residues. Residues 27–36 (YNANDNSLRP) show a composition bias toward polar residues. Over residues 37–47 (ANNKSGAAGNS) the composition is skewed to low complexity. In terms of domain architecture, Sm spans 71–146 (FFMHSATALV…VVKIVAKDFD (76 aa)). Phosphoserine occurs at positions 219 and 232. Disordered regions lie at residues 270 to 376 (FAAV…GQGG), 422 to 458 (GKVMRGNVPPNSSGGGNISAVQGGNGNPVGQSKGGYQ), 476 to 935 (MHGS…TTGT), and 1039 to 1076 (QTPQSTTPSPGQPHQPFHPPPQPSPAGGGPQPAYTPPT). Basic and acidic residues predominate over residues 274-310 (ERPEQDHRRDGDRERERNDRDREREERDRDRDRDRGN). The segment covering 323–347 (ETMSSDRYITKQTRGPQMSHVSMSS) has biased composition (polar residues). Gly residues-rich tracts occupy residues 367-376 (ISGGGAGQGG) and 434-448 (SGGGNISAVQGGNGN). 2 stretches are compositionally biased toward polar residues: residues 476 to 487 (MHGSSQYRNPSH) and 499 to 524 (ANANTNKPLPQRQIRQYQGSQSNSLN). 4 stretches are compositionally biased toward low complexity: residues 552–596 (PPLQ…PQRQ), 623–684 (PPQQ…MQHQ), 697–711 (QPHYVPQPQQQQPQP), and 720–773 (QQQQ…APEP). Residues 774–789 (SQQPLPLYHPMPPPQT) show a composition bias toward pro residues. Low complexity-rich tracts occupy residues 807–825 (ILTAQQPPQQQQLAATPKP) and 835–890 (TTTP…STPV). 2 stretches are compositionally biased toward pro residues: residues 914–926 (PSRPHTPQTPVPM) and 1048–1062 (PGQPHQPFHPPPQPS).

This sequence belongs to the ataxin-2 family.

The protein localises to the cytoplasm. In terms of biological role, regulator of actin filament formation, though it does not directly assemble with actin filaments. Required for oocyte specification and oocyte positioning in the female germline. Also required for normal eye development and bristle morphology. This chain is Ataxin-2 homolog, found in Drosophila pseudoobscura pseudoobscura (Fruit fly).